A 1118-amino-acid chain; its full sequence is Cytospin-A (1118 aa).

Disordered regions lie at residues 1 to 63 (MKKA…AGMA), 75 to 176 (KKST…NQIS), 294 to 324 (SLSPEITPGNQSDGGGTLTSSVEGSAPGSVE), and 359 to 391 (SSDDALDAPSSSESEGVPSIERSRKGSSGNASE). The segment covering 80-90 (SSAAPSAPAPA) has biased composition (low complexity). The span at 93 to 117 (ISENKSKISTGTSSSAKRSTSAGNK) shows a compositional bias: polar residues. Residues 120–131 (SSTRERLRERTR) are compositionally biased toward basic and acidic residues. The span at 133–145 (NQSKKLPSVSQGA) shows a compositional bias: polar residues. Residues 158-171 (TAAEGDIRMSKSKS) are compositionally biased toward basic and acidic residues. Residues 168 to 281 (KSKSDNQISD…LNALGFSLEQ (114 aa)) are a coiled coil. The span at 294–304 (SLSPEITPGNQ) shows a compositional bias: polar residues. Low complexity predominate over residues 359-373 (SSDDALDAPSSSESE). Ser385, Ser386, and Ser390 each carry phosphoserine. Coiled-coil stretches lie at residues 395 to 450 (ACLT…MESL) and 488 to 808 (RYME…RGRV). 3 positions are modified to phosphoserine: Ser869, Ser882, and Ser888. The tract at residues 921-999 (TSSTSRPASL…STRSRIREER (79 aa)) is disordered. A compositionally biased stretch (basic and acidic residues) spans 947–957 (RSSEEMKRDIS). Low complexity predominate over residues 972–992 (TTSPQLSLSSSPTASVTPSTR). The region spanning 1012-1117 (GSKRNALLKW…YVTAIYKYFE (106 aa)) is the Calponin-homology (CH) domain.

This sequence belongs to the cytospin-A family. In terms of assembly, may interact with both microtubules and actin cytoskeleton.

It localises to the cytoplasm. It is found in the cytoskeleton. Its subcellular location is the spindle. The protein localises to the cell junction. The protein resides in the gap junction. Involved in cytokinesis and spindle organization. May play a role in actin cytoskeleton organization and microtubule stabilization and hence required for proper cell adhesion and migration. The protein is Cytospin-A (Specc1l) of Mus musculus (Mouse).